The following is a 311-amino-acid chain: GTP cyclohydrolase FolE2 (311 aa).

Belongs to the GTP cyclohydrolase IV family.

It catalyses the reaction GTP + H2O = 7,8-dihydroneopterin 3'-triphosphate + formate + H(+). It functions in the pathway cofactor biosynthesis; 7,8-dihydroneopterin triphosphate biosynthesis; 7,8-dihydroneopterin triphosphate from GTP: step 1/1. Converts GTP to 7,8-dihydroneopterin triphosphate. The sequence is that of GTP cyclohydrolase FolE2 from Xanthomonas campestris pv. campestris (strain 8004).